A 101-amino-acid chain; its full sequence is Small ribosomal subunit protein uS10 (101 aa).

Belongs to the universal ribosomal protein uS10 family. Part of the 30S ribosomal subunit.

Functionally, involved in the binding of tRNA to the ribosomes. The sequence is that of Small ribosomal subunit protein uS10 from Mycobacterium avium (strain 104).